Reading from the N-terminus, the 358-residue chain is NADH-quinone oxidoreductase subunit H (358 aa).

8 consecutive transmembrane segments (helical) span residues 30-50, 96-116, 129-149, 168-188, 201-221, 265-285, 297-317, and 336-356; these read IAVG…LIYM, FLYN…FACI, VGVF…LLAG, IISY…LMGT, GWFI…YLIA, FIVA…LHII, IPGF…LMWI, and YLVP…AFGF.

The protein belongs to the complex I subunit 1 family. As to quaternary structure, NDH-1 is composed of 14 different subunits. Subunits NuoA, H, J, K, L, M, N constitute the membrane sector of the complex.

The protein resides in the cell inner membrane. It catalyses the reaction a quinone + NADH + 5 H(+)(in) = a quinol + NAD(+) + 4 H(+)(out). In terms of biological role, NDH-1 shuttles electrons from NADH, via FMN and iron-sulfur (Fe-S) centers, to quinones in the respiratory chain. The immediate electron acceptor for the enzyme in this species is believed to be ubiquinone. Couples the redox reaction to proton translocation (for every two electrons transferred, four hydrogen ions are translocated across the cytoplasmic membrane), and thus conserves the redox energy in a proton gradient. This subunit may bind ubiquinone. In Bacteroides thetaiotaomicron (strain ATCC 29148 / DSM 2079 / JCM 5827 / CCUG 10774 / NCTC 10582 / VPI-5482 / E50), this protein is NADH-quinone oxidoreductase subunit H.